Reading from the N-terminus, the 332-residue chain is Long form salivary protein D7L2 (332 aa).

The first 21 residues, 1–21, serve as a signal peptide directing secretion; it reads MFPPRKFLLSSFILAALHVTA. Intrachain disulfides connect C40–C77 and C73–C133. Residue W61 participates in leukotriene E4 binding. Leukotriene E4-binding residues include G157 and K176. Disulfide bonds link C184–C219, C200–C331, and C259–C278. Noradrenaline-binding residues include E185, R203, and H216. Residues D294 and E297 each contribute to the noradrenaline site.

This sequence belongs to the PBP/GOBP family. In terms of assembly, interacts with human CD4. As to expression, saliva (at protein level). Female salivary gland (at protein level). Detected in the head and thorax of the female mosquitoes, where the salivary glands are located.

Its subcellular location is the secreted. Modulates blood feeding of female mosquitoes on vertebrate species by binding and sequestering different mediators involved in the host response, such as biogenic amines and eicosanoids. Binds serotonin, histamine, tryptamine, noradrenaline, leukotriene B4, leukotriene C4, leukotriene D4, leukotriene E4 and U-46619, a stable analog of thromboxane A2. Does not bind adrenaline. Exhibits vasodilating activity. Inhibits agonist-induced platelet aggregation but not blood clotting. Its function is as follows. (Microbial infection) Probably promotes Plasmodium gallinaceum oocyst development in mosquito midgut. This is Long form salivary protein D7L2 from Aedes aegypti (Yellowfever mosquito).